The following is a 262-amino-acid chain: Oxidoreductase AgnL4 (262 aa).

The protein belongs to the avfA family.

The protein operates within secondary metabolite biosynthesis. Functionally, oxidoreductase; part of the gene cluster that mediates the biosynthesis of agnestins, dihydroxy-xanthone metabolites. The pathway begins with the assembly and cyclization of atrochrysone thioester by the non-reducing polyketide synthase Agnpks1. The atrochrysone carboxyl ACP thioesterase AgnL7 then breaks the thioester bond and releases the atrochrysone carboxylic acid as the first enzyme-free intermediate. The decarboxylase AgnL1 then catalyzes the concerted decarboxylation-elimination required to convert atochrysone carboxylic acid into emodin anthrone, which is further oxidized to emodin by the anthrone oxygenase AgnL2. Emodin then undergoes reduction catalyzed by the oxidoreductase AgnL4 to yield the dihydroquinone tautomer which is the substrate for reduction by the short chain dehydrogenase AgnL6 reduction to produce hydroxyketone, followed by AgnL8 dehydration and likely spontaneous autoxidation to chrysophanol. Baeyer-Villiger oxidation by the oxidase AgnL3 leads to monodictyphenone via cleavage of the C-10/C-10a bond of chrysophanol. Alternative cleavage at the C-4a/C-10 bond of chrysophanol also leads to the formation some cephalone F. Further conversion to agnestins A and B, requires reduction to dihydro-monodictyphenone, oxidation to agnestin C probably via an epoxide, and rearrangement to either agnestin A or agnestin B directly, although agnestin A or agnestin B can also interconvert. Within the cluster, AgnR1 is the only unassigned oxidoreductase present which could be involved in this conversion. However, AgnR1 seems not to be involved in this step, and thus genes involved in the proposed oxidation/reduction may be located elsewhere on the genome. Further agnestin A derivatives are probably formed by spontaneous decarboxylations, dehydrations and methanolysis reactions. This Paecilomyces divaricatus (Penicillium divaricatum) protein is Oxidoreductase AgnL4.